A 225-amino-acid polypeptide reads, in one-letter code: uncharacterized protein (225 aa).

The first 22 residues, 1-22 (MLQHYSVSWKKGLAALCLLAVA), serve as a signal peptide directing secretion. The region spanning 161–190 (GNLTAAEEKKTGCLVCLDSCPVGIVSNATY) is the 4Fe-4S ferredoxin-type domain.

This is an uncharacterized protein from Escherichia coli (strain K12).